We begin with the raw amino-acid sequence, 416 residues long: Histidine--tRNA ligase (416 aa).

The protein belongs to the class-II aminoacyl-tRNA synthetase family.

It localises to the cytoplasm. It catalyses the reaction tRNA(His) + L-histidine + ATP = L-histidyl-tRNA(His) + AMP + diphosphate + H(+). The chain is Histidine--tRNA ligase from Methanococcus maripaludis (strain DSM 14266 / JCM 13030 / NBRC 101832 / S2 / LL).